The chain runs to 122 residues: UPF0102 protein Atu0303 (122 aa).

It belongs to the UPF0102 family.

This Agrobacterium fabrum (strain C58 / ATCC 33970) (Agrobacterium tumefaciens (strain C58)) protein is UPF0102 protein Atu0303.